A 304-amino-acid chain; its full sequence is UDP-3-O-acyl-N-acetylglucosamine deacetylase (304 aa).

The Zn(2+) site is built by histidine 78, histidine 237, and aspartate 241. The Proton donor role is filled by histidine 264.

Belongs to the LpxC family. Zn(2+) serves as cofactor.

The catalysed reaction is a UDP-3-O-[(3R)-3-hydroxyacyl]-N-acetyl-alpha-D-glucosamine + H2O = a UDP-3-O-[(3R)-3-hydroxyacyl]-alpha-D-glucosamine + acetate. It participates in glycolipid biosynthesis; lipid IV(A) biosynthesis; lipid IV(A) from (3R)-3-hydroxytetradecanoyl-[acyl-carrier-protein] and UDP-N-acetyl-alpha-D-glucosamine: step 2/6. In terms of biological role, catalyzes the hydrolysis of UDP-3-O-myristoyl-N-acetylglucosamine to form UDP-3-O-myristoylglucosamine and acetate, the committed step in lipid A biosynthesis. This is UDP-3-O-acyl-N-acetylglucosamine deacetylase from Xylella fastidiosa (strain 9a5c).